The following is a 193-amino-acid chain: Ribonuclease HII (193 aa).

Positions C15–C193 constitute an RNase H type-2 domain. Residues D21, E22, and D112 each coordinate a divalent metal cation.

This sequence belongs to the RNase HII family. Mn(2+) serves as cofactor. Mg(2+) is required as a cofactor.

The protein localises to the cytoplasm. It carries out the reaction Endonucleolytic cleavage to 5'-phosphomonoester.. Endonuclease that specifically degrades the RNA of RNA-DNA hybrids. The chain is Ribonuclease HII from Rickettsia rickettsii (strain Iowa).